We begin with the raw amino-acid sequence, 396 residues long: L-tyrosine/L-aspartate decarboxylase (396 aa).

Lys-245 is modified (N6-(pyridoxal phosphate)lysine).

It belongs to the group II decarboxylase family. MfnA subfamily. In terms of assembly, homodimer. It depends on pyridoxal 5'-phosphate as a cofactor.

The enzyme catalyses L-tyrosine + H(+) = tyramine + CO2. It carries out the reaction L-aspartate + H(+) = beta-alanine + CO2. Its pathway is cofactor biosynthesis; methanofuran biosynthesis. It functions in the pathway cofactor biosynthesis; coenzyme A biosynthesis. Its activity is regulated as follows. Inhibited by hydroxylamine and O-methylhydroxylamine. Its function is as follows. Catalyzes the decarboxylation of L-tyrosine to produce tyramine for methanofuran biosynthesis. Can also catalyze the decarboxylation of L-aspartate to produce beta-alanine for coenzyme A (CoA) biosynthesis. The protein is L-tyrosine/L-aspartate decarboxylase of Methanocaldococcus jannaschii (strain ATCC 43067 / DSM 2661 / JAL-1 / JCM 10045 / NBRC 100440) (Methanococcus jannaschii).